The chain runs to 378 residues: Tetraacyldisaccharide 4'-kinase (378 aa).

An ATP-binding site is contributed by 63 to 70 (AVGGAGKT).

This sequence belongs to the LpxK family.

It carries out the reaction a lipid A disaccharide + ATP = a lipid IVA + ADP + H(+). It functions in the pathway glycolipid biosynthesis; lipid IV(A) biosynthesis; lipid IV(A) from (3R)-3-hydroxytetradecanoyl-[acyl-carrier-protein] and UDP-N-acetyl-alpha-D-glucosamine: step 6/6. Functionally, transfers the gamma-phosphate of ATP to the 4'-position of a tetraacyldisaccharide 1-phosphate intermediate (termed DS-1-P) to form tetraacyldisaccharide 1,4'-bis-phosphate (lipid IVA). This Anaeromyxobacter sp. (strain K) protein is Tetraacyldisaccharide 4'-kinase.